The chain runs to 435 residues: AP-2 complex subunit mu (435 aa).

Positions 170–434 (RNELFLDVLE…IGRSGIYETR (265 aa)) constitute an MHD domain. A 1,2-diacyl-sn-glycero-3-phospho-(1D-myo-inositol-3,4,5-trisphosphate) contacts are provided by Lys-341, Lys-345, and Lys-354.

The protein belongs to the adaptor complexes medium subunit family. Adaptor protein complex 2 (AP-2) is a heterotetramer composed of two large adaptins (alpha-type subunit and beta-type subunit), a medium adaptin (mu-type subunit) and a small adaptin (sigma-type subunit).

The protein localises to the cell membrane. The protein resides in the membrane. It is found in the coated pit. Its function is as follows. Component of the adaptor complexes which link clathrin to receptors in coated vesicles. Clathrin-associated protein complexes are believed to interact with the cytoplasmic tails of membrane proteins, leading to their selection and concentration. AP50 is a subunit of the plasma membrane adaptor. The complex binds polyphosphoinositide-containing lipids. The protein is AP-2 complex subunit mu (ap2m1) of Xenopus laevis (African clawed frog).